The primary structure comprises 183 residues: GTP cyclohydrolase 1 (183 aa).

3 residues coordinate Zn(2+): cysteine 71, histidine 74, and cysteine 142.

It belongs to the GTP cyclohydrolase I family. As to quaternary structure, toroid-shaped homodecamer, composed of two pentamers of five dimers.

The catalysed reaction is GTP + H2O = 7,8-dihydroneopterin 3'-triphosphate + formate + H(+). It participates in cofactor biosynthesis; 7,8-dihydroneopterin triphosphate biosynthesis; 7,8-dihydroneopterin triphosphate from GTP: step 1/1. This is GTP cyclohydrolase 1 from Leptospira interrogans serogroup Icterohaemorrhagiae serovar copenhageni (strain Fiocruz L1-130).